Consider the following 157-residue polypeptide: 2-C-methyl-D-erythritol 2,4-cyclodiphosphate synthase (157 aa).

D8 and H10 together coordinate a divalent metal cation. 4-CDP-2-C-methyl-D-erythritol 2-phosphate-binding positions include 8-10 and 34-35; these read DIH and HS. Residue H42 participates in a divalent metal cation binding. 4-CDP-2-C-methyl-D-erythritol 2-phosphate contacts are provided by residues 56–58 and 132–135; these read DIG and TTNE.

It belongs to the IspF family. As to quaternary structure, homotrimer. Requires a divalent metal cation as cofactor.

The catalysed reaction is 4-CDP-2-C-methyl-D-erythritol 2-phosphate = 2-C-methyl-D-erythritol 2,4-cyclic diphosphate + CMP. Its pathway is isoprenoid biosynthesis; isopentenyl diphosphate biosynthesis via DXP pathway; isopentenyl diphosphate from 1-deoxy-D-xylulose 5-phosphate: step 4/6. Involved in the biosynthesis of isopentenyl diphosphate (IPP) and dimethylallyl diphosphate (DMAPP), two major building blocks of isoprenoid compounds. Catalyzes the conversion of 4-diphosphocytidyl-2-C-methyl-D-erythritol 2-phosphate (CDP-ME2P) to 2-C-methyl-D-erythritol 2,4-cyclodiphosphate (ME-CPP) with a corresponding release of cytidine 5-monophosphate (CMP). This Synechococcus sp. (strain JA-3-3Ab) (Cyanobacteria bacterium Yellowstone A-Prime) protein is 2-C-methyl-D-erythritol 2,4-cyclodiphosphate synthase.